A 134-amino-acid polypeptide reads, in one-letter code: UPF0357 protein YCL012C (134 aa).

Positions 1-23 (MKSLFYLKLLLWVVLLSLCLLMA) are cleaved as a signal peptide. Phosphoserine occurs at positions 71 and 74. A Glycyl lysine isopeptide (Lys-Gly) (interchain with G-Cter in ubiquitin) cross-link involves residue K86.

It belongs to the UPF0357 family.

The protein is UPF0357 protein YCL012C of Saccharomyces cerevisiae (strain ATCC 204508 / S288c) (Baker's yeast).